A 171-amino-acid polypeptide reads, in one-letter code: Protein BTG1 (171 aa).

Ser-159 carries the phosphoserine modification.

This sequence belongs to the BTG family. As to quaternary structure, interacts with CNOT7 and CNOT8.

Its function is as follows. Anti-proliferative protein. This Homo sapiens (Human) protein is Protein BTG1 (BTG1).